Reading from the N-terminus, the 222-residue chain is Superoxide dismutase [Mn], mitochondrial (222 aa).

Residues Met-1–His-24 constitute a mitochondrion transit peptide. His-50 serves as a coordination point for Mn(2+). 3'-nitrotyrosine is present on Tyr-58. N6-acetyllysine; alternate is present on residues Lys-68 and Lys-75. N6-succinyllysine; alternate is present on residues Lys-68 and Lys-75. Residue His-98 participates in Mn(2+) binding. At Lys-114 the chain carries N6-acetyllysine. An N6-acetyllysine; alternate mark is found at Lys-122 and Lys-130. 2 positions are modified to N6-succinyllysine; alternate: Lys-122 and Lys-130. Mn(2+) contacts are provided by Asp-183 and His-187. Lys-202 is subject to N6-acetyllysine.

It belongs to the iron/manganese superoxide dismutase family. As to quaternary structure, homotetramer. Requires Mn(2+) as cofactor. Nitrated under oxidative stress. Nitration coupled with oxidation inhibits the catalytic activity. Post-translationally, acetylation at Lys-122 decreases enzymatic activity. Deacetylated by SIRT3 upon exposure to ionizing radiations or after long fasting. In terms of processing, polyubiquitinated; leading to proteasomal degradation. Deubiquitinated by USP36 which increases protein stability.

Its subcellular location is the mitochondrion matrix. The enzyme catalyses 2 superoxide + 2 H(+) = H2O2 + O2. Functionally, destroys superoxide anion radicals which are normally produced within the cells and which are toxic to biological systems. This Mus musculus (Mouse) protein is Superoxide dismutase [Mn], mitochondrial (Sod2).